An 89-amino-acid polypeptide reads, in one-letter code: Neurotoxin beta-KTx 52.1 (89 aa).

A signal peptide spans 1–20 (MKQYIFFLALIVLTATFAEA). Positions 21–39 (GKKTEILDKVKKVFSKAKD) are excised as a propeptide. One can recognise a BetaSPN-type CS-alpha/beta domain in the interval 53 to 89 (ELGCPFIDKWCEDHCDSKKLVGKCENFDCSCVKLGGK). 3 disulfides stabilise this stretch: Cys56-Cys76, Cys63-Cys81, and Cys67-Cys83.

Belongs to the long chain scorpion toxin family. Class 2 subfamily. Expressed by the venom gland.

It localises to the secreted. Functionally, inhibits voltage-gated potassium channel. The chain is Neurotoxin beta-KTx 52.1 from Lychas mucronatus (Chinese swimming scorpion).